A 453-amino-acid polypeptide reads, in one-letter code: CAAX prenyl protease 1 (453 aa).

Residues 1 to 12 (MFDLKTILDHPN) are Lumenal-facing. Residues 13-33 (IPWKLIISGFSIAQFSFESYL) traverse the membrane as a helical segment. Over 34–89 (TYRQYQKLSETKLPPVLEDEIDDETFHKSRNYSRAKAKFSIFGDVYNLAQKLVFIK) the chain is Cytoplasmic. The helical transmembrane segment at 90–110 (YDLFPKIWHMAVSLLNAVLPV) threads the bilayer. Residues 111–121 (RFHMVSTVAQS) are Lumenal-facing. The helical transmembrane segment at 122–142 (LCFLGLLSSLSTLVDLPLSYY) threads the bilayer. The Cytoplasmic portion of the chain corresponds to 143–167 (SHFVLEEKFGFNKLTVQLWITDMIK). A helical transmembrane segment spans residues 168 to 188 (SLTLAYAIGGPILYLFLKIFD). The Lumenal portion of the chain corresponds to 189–197 (KFPTDFLWY). A helical membrane pass occupies residues 198-218 (IMVFLFVVQILAMTIIPVFIM). Residues 219-306 (PMFNKFTPLE…HEIGHWQKNH (88 aa)) are Cytoplasmic-facing. Residue histidine 297 participates in Zn(2+) binding. Residue glutamate 298 is part of the active site. Zn(2+) is bound at residue histidine 301. Residues 307–327 (IVNMVIFSQLHTFLIFSLFTS) form a helical membrane-spanning segment. Residues 328–357 (IYRNTSFYNTFGFFLEKSTGSFVDPVITKE) are Lumenal-facing. A helical membrane pass occupies residues 358–378 (FPIIIGFMLFNDLLTPLECAM). At 379-453 (QFVMSLISRT…LDYVSEKKKN (75 aa)) the chain is on the cytoplasmic side. Glutamate 390 is a binding site for Zn(2+). The active-site Proton donor is aspartate 394.

The protein belongs to the peptidase M48A family. Zn(2+) serves as cofactor.

The protein resides in the endoplasmic reticulum membrane. The catalysed reaction is Hydrolyzes the peptide bond -P2-(S-farnesyl or geranylgeranyl)C-P1'-P2'-P3'-COOH where P1' and P2' are amino acids with aliphatic side chains and P3' is any C-terminal residue.. Functionally, proteolytically removes the C-terminal three residues of farnesylated A-factor mating pheromone. Also acts to cleave the N-terminal extension of the pheromone. Does not act on Ras. The protein is CAAX prenyl protease 1 (STE24) of Saccharomyces cerevisiae (strain ATCC 204508 / S288c) (Baker's yeast).